The primary structure comprises 48 residues: Lantibiotic salivaricin-A (48 aa).

Positions 1 to 26 (MKNSKDILNNAIEEVSEKELMEVAGG) are excised as a propeptide. 2 consecutive cross-links (beta-methyllanthionine (Thr-Cys)) follow at residues 35–40 (TITDDC) and 37–47 (TDDCPNSVFVC). A cross-link (lanthionine (Ser-Cys)) is located at residues 43–48 (SVFVCC).

The protein belongs to the type A lantibiotic family. Post-translationally, maturation of lantibiotics involves the enzymatic conversion of Thr, and Ser into dehydrated AA and the formation of thioether bonds with cysteine. This is followed by membrane translocation and cleavage of the modified precursor.

Functionally, lanthionine-containing peptide antibiotic (lantibiotic) active on Gram-positive bacteria. The bactericidal activity of lantibiotics is based on depolarization of energized bacterial cytoplasmic membranes, initiated by the formation of aqueous transmembrane pores. In Streptococcus salivarius, this protein is Lantibiotic salivaricin-A (salA).